A 699-amino-acid polypeptide reads, in one-letter code: Elongation factor G (699 aa).

The tr-type G domain occupies 8–283 (EHIRNIGICA…AVVDFLPSPI (276 aa)). Residues 17 to 24 (AHIDAGKT), 81 to 85 (DTPGH), and 135 to 138 (NKMD) contribute to the GTP site.

The protein belongs to the TRAFAC class translation factor GTPase superfamily. Classic translation factor GTPase family. EF-G/EF-2 subfamily.

The protein localises to the cytoplasm. Functionally, catalyzes the GTP-dependent ribosomal translocation step during translation elongation. During this step, the ribosome changes from the pre-translocational (PRE) to the post-translocational (POST) state as the newly formed A-site-bound peptidyl-tRNA and P-site-bound deacylated tRNA move to the P and E sites, respectively. Catalyzes the coordinated movement of the two tRNA molecules, the mRNA and conformational changes in the ribosome. The polypeptide is Elongation factor G (Rickettsia peacockii (strain Rustic)).